The chain runs to 358 residues: 4-hydroxybenzoate polyprenyltransferase, mitochondrial (358 aa).

The N-terminal 20 residues, 1 to 20 (MIIKPIASPARYFLRTPSWS), are a transit peptide targeting the mitochondrion. The next 7 membrane-spanning stretches (helical) occupy residues 76–96 (TGTY…AYAY), 107–127 (LALF…INDL), 154–174 (AISL…QLNP), 202–222 (VVLG…LAGE), 229–249 (VVAP…TIYA), 275–295 (VLCG…IMNG), and 336–356 (NTGY…SFIY).

The protein belongs to the UbiA prenyltransferase family. It depends on Mg(2+) as a cofactor.

It is found in the mitochondrion. Its subcellular location is the mitochondrion inner membrane. It catalyses the reaction an all-trans-polyprenyl diphosphate + 4-hydroxybenzoate = a 4-hydroxy-3-(all-trans-polyprenyl)benzoate + diphosphate. It functions in the pathway cofactor biosynthesis; ubiquinone biosynthesis. In terms of biological role, catalyzes the prenylation of para-hydroxybenzoate (PHB) with an all-trans polyprenyl group. Mediates the second step in the final reaction sequence of coenzyme Q (CoQ) biosynthesis, which is the condensation of the polyisoprenoid side chain with PHB, generating the first membrane-bound Q intermediate. The protein is 4-hydroxybenzoate polyprenyltransferase, mitochondrial of Schizosaccharomyces pombe (strain 972 / ATCC 24843) (Fission yeast).